Consider the following 525-residue polypeptide: Transmembrane protein 184C (525 aa).

7 consecutive transmembrane segments (helical) span residues 17 to 37, 48 to 68, 83 to 103, 121 to 141, 212 to 232, 254 to 274, and 287 to 307; these read LLVLFYATTILVAVPICIWKF, SWFIAGIFLLLTIPVSLWGIL, IIRILWMVPIYSVDSWVALVY, VIYNFMIFLTNYLTIRFPNLI, YLVILNNLSQLFAMYCLLLFY, VVFVSFWQAVLIALLVKLGVI, and AVATGLQDFIICIEMFFAAIA. 2 disordered regions span residues 358–394 and 483–525; these read PKKKCFPGDPDHNEHSSLLSSSSQDLTSGSSKVPSPG and LFPS…STDP. A compositionally biased stretch (low complexity) spans 373–388; it reads SSLLSSSSQDLTSGSS. Residues 483–502 are compositionally biased toward polar residues; it reads LFPSTETSENSMIDTSESQQ. Residues 503–525 are compositionally biased toward low complexity; the sequence is ESSDLCTESSDSSTESSDLSTDP.

This sequence belongs to the TMEM184 family.

The protein resides in the membrane. Functionally, possible tumor suppressor which may play a role in cell growth. The chain is Transmembrane protein 184C (Tmem184c) from Mus musculus (Mouse).